Here is a 212-residue protein sequence, read N- to C-terminus: Thymidylate kinase (212 aa).

Residue 9–16 (GIDGCGKT) coordinates ATP.

Belongs to the thymidylate kinase family.

It catalyses the reaction dTMP + ATP = dTDP + ADP. Its function is as follows. Phosphorylation of dTMP to form dTDP in both de novo and salvage pathways of dTTP synthesis. In Synechococcus sp. (strain CC9311), this protein is Thymidylate kinase.